The following is a 1279-amino-acid chain: ATP-dependent helicase/nuclease subunit A (1279 aa).

Positions 4–499 (TKWTDEQRQA…VKLFKNFRSR (496 aa)) constitute a UvrD-like helicase ATP-binding domain. Residue 25-32 (AGAGAGKT) participates in ATP binding. The UvrD-like helicase C-terminal domain maps to 526–853 (EEALKVGASY…RIMSIHKSKG (328 aa)).

It belongs to the helicase family. AddA subfamily. As to quaternary structure, heterodimer of AddA and AddB/RexB. Requires Mg(2+) as cofactor.

It catalyses the reaction Couples ATP hydrolysis with the unwinding of duplex DNA by translocating in the 3'-5' direction.. The enzyme catalyses ATP + H2O = ADP + phosphate + H(+). In terms of biological role, the heterodimer acts as both an ATP-dependent DNA helicase and an ATP-dependent, dual-direction single-stranded exonuclease. Recognizes the chi site generating a DNA molecule suitable for the initiation of homologous recombination. The AddA nuclease domain is required for chi fragment generation; this subunit has the helicase and 3' -&gt; 5' nuclease activities. The polypeptide is ATP-dependent helicase/nuclease subunit A (Clostridium botulinum (strain Kyoto / Type A2)).